We begin with the raw amino-acid sequence, 1905 residues long: Bromodomain adjacent to zinc finger domain protein 2A (1905 aa).

Disordered regions lie at residues 1–59 and 362–434; these read MEME…NGLS and TSIF…PTTS. Polar residues-rich tracts occupy residues 35-59, 379-391, and 399-420; these read TNGSPMNFPQQGKSLNGDVNVNGLS, LQDNSFDLNNGSD, and TQSSDFPPSLTQPAPDQSSTIQ. Threonine 507 carries the phosphothreonine modification. Serine 509 carries the post-translational modification Phosphoserine. One can recognise an MBD domain in the interval 546 to 617; sequence IATPEEVRLP…EHFSFSPRMP (72 aa). Threonine 548 is subject to Phosphothreonine. Phosphoserine is present on serine 613. Positions 648 to 792 are disordered; sequence ITGKRGRPRN…KEKEEVTKAK (145 aa). 2 consecutive DNA-binding regions (a.T hook) follow at residues 649–661 and 670–682; these read TGKRGRPRNTEKA and KRGRGRPPKVKIT. Basic and acidic residues predominate over residues 656 to 668; the sequence is RNTEKAKTKEVPK. The segment covering 669-678 has biased composition (basic residues); the sequence is VKRGRGRPPK. Lysine 680 bears the N6-acetyllysine; by KAT8 mark. Positions 686–709 are enriched in basic and acidic residues; that stretch reads NKTDNRPLKKLEAQETLNEEDKAK. Residues 693–792 adopt a coiled-coil conformation; it reads LKKLEAQETL…KEKEEVTKAK (100 aa). A compositionally biased stretch (basic residues) spans 710 to 721; it reads IAKSKKKMRQKV. Polar residues predominate over residues 725–734; it reads ECQTTIQGQA. Basic and acidic residues-rich tracts occupy residues 739–748 and 756–792; these read KQETKSLKQK and AEKEKGKTKQEKLKEKVKREKKEKVKMKEKEEVTKAK. Lysine 799 is modified (N6-acetyllysine). A DDT domain is found at 848–913; the sequence is SGAFSDCLTI…LKAALHDPGF (66 aa). Lysine 866 participates in a covalent cross-link: Glycyl lysine isopeptide (Lys-Gly) (interchain with G-Cter in SUMO2). Position 1051 is a phosphoserine (serine 1051). Residues lysine 1150 and lysine 1172 each participate in a glycyl lysine isopeptide (Lys-Gly) (interchain with G-Cter in SUMO2) cross-link. Disordered stretches follow at residues 1178-1220, 1283-1318, and 1330-1412; these read SNTT…PQAQ, LSSSVLTPDSSPGKLDPAPSQPPEEPEPDEAESSPD, and MPCN…RPPS. Position 1184 is a phosphoserine (serine 1184). A DNA-binding region (a.T hook 3) is located at residues 1186 to 1198; that stretch reads ARARGRPRKTKPG. The segment covering 1283–1293 has biased composition (low complexity); that stretch reads LSSSVLTPDSS. The span at 1306-1315 shows a compositional bias: acidic residues; that stretch reads EEPEPDEAES. The segment covering 1345–1359 has biased composition (polar residues); sequence DQPTPSPQQLASSKP. Serine 1397 is subject to Phosphoserine. The segment at residues 1404–1416 is a DNA-binding region (a.T hook 4); it reads PKRRGRPPSKFFK. Serine 1559 is modified (phosphoserine). Residues lysine 1676 and lysine 1709 each participate in a glycyl lysine isopeptide (Lys-Gly) (interchain with G-Cter in SUMO2) cross-link. Residues 1676-1726 form a PHD-type zinc finger; sequence KVTCLVCRKGDNDEFLLLCDGCDRGCHIYCHRPKMEAVPEGDWFCTVCLAQ. Disordered stretches follow at residues 1734–1755 and 1769–1789; these read QKPGFPKRGQKRKSGYSLNFSE and ESPAAGPRYSEEGLSPSKRRR. 4 positions are modified to phosphoserine: serine 1747, serine 1770, serine 1783, and serine 1785. Residues 1793–1897 form the Bromo domain; that stretch reads RNHHSDLTFC…RFFESRWEEF (105 aa).

It belongs to the WAL family. As to quaternary structure, component of the NoRC-1 ISWI chromatin remodeling complex at least composed of SMARCA1 and BAZ2A/TIP5, which regulates the spacing of histone octamers on the DNA template to facilitate access to DNA. Within the NoRC-1 ISWI chromatin remodeling complex interacts with SMARCA1; the interaction is direct. Component of the NoRC-5 ISWI chromatin remodeling complex (also called the NoRC nucleolar-remodeling complex), at least composed of SMARCA5/SNF2H and BAZ2A/TIP5, which regulates the spacing of histone octamers on the DNA template to facilitate access to DNA. Within the NoRC-5 ISWI chromatin remodeling complexes interacts with SMARCA5/SNF2H; the interaction is direct. Interacts with TTF1; the interaction is required for recruitment of the NoRC-5 ISWI chromatin remodeling complex to rDNA. Interacts with HDAC1. Interacts with SIN3A. Interacts with DNMT1 and DNM3B. Interacts with BEND3 and USP21. Post-translationally, acetylation at Lys-680 by KAT8/MOF promotes its dissociation from pRNA, affecting heterochromatin formation, nucleosome positioning and rDNA silencing. Deacetylation by SIRT1 in late S phase enhances pRNA-binding, allowing de novo DNA methylation and heterochromatin formation. Acetylation is high during S phase and declines to background levels in late S phase when the silent copies of rRNA genes are replicated. Ubiquitinated. Deubiquitinated by USP21 leading to its stabilization. As to expression, expressed at moderate levels in most tissues analyzed, including heart, brain, placenta, lung, skeletal muscle, kidney and pancreas.

It is found in the nucleus. The protein localises to the nucleolus. In terms of biological role, regulatory subunit of the ATP-dependent NoRC-1 and NoRC-5 ISWI chromatin remodeling complexes, which form ordered nucleosome arrays on chromatin and facilitate access to DNA during DNA-templated processes such as DNA replication, transcription, and repair. Both complexes regulate the spacing of nucleosomes along the chromatin and have the ability to slide mononucleosomes to the center of a DNA template. Directly stimulates the ATPase activity of SMARCA5 in the NoRC-5 ISWI chromatin remodeling complex. The NoRC-1 ISWI chromatin remodeling complex has a lower ATP hydrolysis rate than the NoRC-5 ISWI chromatin remodeling complex. Within the NoRC-5 ISWI chromatin remodeling complex, mediates silencing of a fraction of rDNA by recruiting histone-modifying enzymes and DNA methyltransferases, leading to heterochromatin formation and transcriptional silencing. In the complex, it plays a central role by being recruited to rDNA and by targeting chromatin modifying enzymes such as HDAC1, leading to repress RNA polymerase I transcription. Recruited to rDNA via its interaction with TTF1 and its ability to recognize and bind histone H4 acetylated on 'Lys-16' (H4K16ac), leading to deacetylation of H4K5ac, H4K8ac, H4K12ac but not H4K16ac. Specifically binds pRNAs, 150-250 nucleotide RNAs that are complementary in sequence to the rDNA promoter; pRNA-binding is required for heterochromatin formation and rDNA silencing. This is Bromodomain adjacent to zinc finger domain protein 2A (BAZ2A) from Homo sapiens (Human).